The following is a 141-amino-acid chain: Large ribosomal subunit protein uL11 (141 aa).

The protein belongs to the universal ribosomal protein uL11 family. As to quaternary structure, part of the ribosomal stalk of the 50S ribosomal subunit. Interacts with L10 and the large rRNA to form the base of the stalk. L10 forms an elongated spine to which L12 dimers bind in a sequential fashion forming a multimeric L10(L12)X complex. One or more lysine residues are methylated.

Its function is as follows. Forms part of the ribosomal stalk which helps the ribosome interact with GTP-bound translation factors. In Synechococcus sp. (strain JA-3-3Ab) (Cyanobacteria bacterium Yellowstone A-Prime), this protein is Large ribosomal subunit protein uL11.